The primary structure comprises 463 residues: Probable glycosyltransferase 3 (463 aa).

The Cytoplasmic portion of the chain corresponds to 1–24; that stretch reads MAVTGGGRPAVRQQAARGKQMQRT. Residues 25-47 traverse the membrane as a helical; Signal-anchor for type II membrane protein segment; sequence FNNVKITLICGFITLLVLRGTVG. Topologically, residues 48–463 are lumenal; the sequence is INLLTYGVGG…ALKMDAKIES (416 aa). Residues 82-125 are disordered; that stretch reads EIRSDTDDDDDDEEEEPLGVDASTTTTTNSTTTTATAARRRSSN. The segment covering 87 to 99 has biased composition (acidic residues); it reads TDDDDDDEEEEPL. The span at 103–118 shows a compositional bias: low complexity; sequence ASTTTTTNSTTTTATA. N-linked (GlcNAc...) asparagine glycans are attached at residues N110, N125, and N442.

This sequence belongs to the glycosyltransferase 34 family.

Its subcellular location is the golgi apparatus membrane. Functionally, probable glycosyltransferase that may be involved in the biosynthesis of xyloglucan. The chain is Probable glycosyltransferase 3 from Oryza sativa subsp. japonica (Rice).